Here is a 363-residue protein sequence, read N- to C-terminus: rRNA processing protein rcl1 (363 aa).

Belongs to the RNA 3'-terminal cyclase family. Type 2 subfamily. As to quaternary structure, interacts directly with bms1 and the U3 snoRNA to form a stable subcomplex. Component of the 90S small subunit processome also known as 90S pre-ribosome that consists of the 35S pre-rRNA, early-associating ribosomal proteins most of which are part of the small ribosomal subunit, the U3 snoRNA and associated proteins.

It localises to the nucleus. The protein resides in the nucleolus. In terms of biological role, does not have cyclase activity. Plays a role in 40S-ribosomal-subunit biogenesis in the early pre-rRNA processing steps at sites A0, A1 and A2 that are required for proper maturation of the 18S RNA. Rcl1 activates bms1 by promoting GDP/GTP exchange. The protein is rRNA processing protein rcl1 (rcl1) of Schizosaccharomyces pombe (strain 972 / ATCC 24843) (Fission yeast).